The chain runs to 146 residues: Holo-[acyl-carrier-protein] synthase (146 aa).

Mg(2+)-binding residues include Asp9 and Glu63.

This sequence belongs to the P-Pant transferase superfamily. AcpS family. Requires Mg(2+) as cofactor.

The protein resides in the cytoplasm. It catalyses the reaction apo-[ACP] + CoA = holo-[ACP] + adenosine 3',5'-bisphosphate + H(+). Transfers the 4'-phosphopantetheine moiety from coenzyme A to a Ser of acyl-carrier-protein. This chain is Holo-[acyl-carrier-protein] synthase, found in Burkholderia multivorans (strain ATCC 17616 / 249).